Reading from the N-terminus, the 545-residue chain is ATP synthase subunit alpha, mitochondrial (545 aa).

Residues 1–35 (MLARTAAIRSLSRTLINSTKAARPAAAALASTRRL) constitute a mitochondrion transit peptide. Phosphoserine is present on residues S57 and S178. ATP is bound at residue 206 to 213 (GDRQTGKT).

This sequence belongs to the ATPase alpha/beta chains family. As to quaternary structure, F-type ATPases have 2 components, CF(1) - the catalytic core - and CF(0) - the membrane proton channel. CF(1) has five subunits: alpha(3), beta(3), gamma(1), delta(1), epsilon(1). CF(0) has three main subunits: a, b and c.

The protein resides in the mitochondrion inner membrane. Its function is as follows. Mitochondrial membrane ATP synthase (F(1)F(0) ATP synthase or Complex V) produces ATP from ADP in the presence of a proton gradient across the membrane which is generated by electron transport complexes of the respiratory chain. F-type ATPases consist of two structural domains, F(1) - containing the extramembraneous catalytic core, and F(0) - containing the membrane proton channel, linked together by a central stalk and a peripheral stalk. During catalysis, ATP synthesis in the catalytic domain of F(1) is coupled via a rotary mechanism of the central stalk subunits to proton translocation. Subunits alpha and beta form the catalytic core in F(1). Rotation of the central stalk against the surrounding alpha(3)beta(3) subunits leads to hydrolysis of ATP in three separate catalytic sites on the beta subunits. Subunit alpha does not bear the catalytic high-affinity ATP-binding sites. The protein is ATP synthase subunit alpha, mitochondrial (ATP1) of Saccharomyces cerevisiae (strain ATCC 204508 / S288c) (Baker's yeast).